Reading from the N-terminus, the 191-residue chain is Fe/S biogenesis protein NfuA (191 aa).

Positions 149 and 152 each coordinate [4Fe-4S] cluster.

The protein belongs to the NfuA family. Homodimer. [4Fe-4S] cluster is required as a cofactor.

Involved in iron-sulfur cluster biogenesis. Binds a 4Fe-4S cluster, can transfer this cluster to apoproteins, and thereby intervenes in the maturation of Fe/S proteins. Could also act as a scaffold/chaperone for damaged Fe/S proteins. This Pectobacterium carotovorum subsp. carotovorum (strain PC1) protein is Fe/S biogenesis protein NfuA.